We begin with the raw amino-acid sequence, 192 residues long: Ciliary microtubule-associated protein 3 (192 aa).

Interacts with proteins involved in ciliary transport, including ARL13B, CETN1, KIF3A, RAB6A, RAB8A, TUBB1 and TUBG1. Interacts with AURKA.

It is found in the cytoplasmic vesicle. The protein localises to the golgi apparatus. It localises to the trans-Golgi network. Its subcellular location is the cytoplasm. In terms of biological role, during primary cilia disassembly, involved in cilia disassembly. Required specifically to control cilia retraction as well as the liberation and duplication of the basal body/centrosome. May act by stimulating AURKA activity at the basal body in a cell cycle-dependent manner. The sequence is that of Ciliary microtubule-associated protein 3 (CIMAP3) from Bos taurus (Bovine).